A 437-amino-acid polypeptide reads, in one-letter code: Nicotinate phosphoribosyltransferase (437 aa).

At histidine 231 the chain carries Phosphohistidine; by autocatalysis.

The protein belongs to the NAPRTase family. Transiently phosphorylated on a His residue during the reaction cycle. Phosphorylation strongly increases the affinity for substrates and increases the rate of nicotinate D-ribonucleotide production. Dephosphorylation regenerates the low-affinity form of the enzyme, leading to product release.

The catalysed reaction is nicotinate + 5-phospho-alpha-D-ribose 1-diphosphate + ATP + H2O = nicotinate beta-D-ribonucleotide + ADP + phosphate + diphosphate. The protein operates within cofactor biosynthesis; NAD(+) biosynthesis; nicotinate D-ribonucleotide from nicotinate: step 1/1. Its function is as follows. Catalyzes the synthesis of beta-nicotinate D-ribonucleotide from nicotinate and 5-phospho-D-ribose 1-phosphate at the expense of ATP. This Vibrio vulnificus (strain YJ016) protein is Nicotinate phosphoribosyltransferase.